A 236-amino-acid chain; its full sequence is CD81 antigen (236 aa).

At 1–12 (MGVEGCTKCIKY) the chain is on the cytoplasmic side. The helical transmembrane segment at 13–33 (LLFVFNFVFWLAGGVILGVAL) threads the bilayer. Topologically, residues 34-63 (WLRHDPQTTNLLYLELGDKPAPNTFYVGIY) are extracellular. A helical membrane pass occupies residues 64 to 84 (ILIAVGAVMMFVGFLGCYGAI). Topologically, residues 85-89 (QESQC) are cytoplasmic. The helical transmembrane segment at 90-112 (LLGTFFTCLVILFACEVAAGIWG) threads the bilayer. Over 113-201 (FVNKDQIAKD…QKIDDLFSGK (89 aa)) the chain is Extracellular. 2 disulfide bridges follow: Cys-156–Cys-190 and Cys-157–Cys-175. The helical transmembrane segment at 202 to 224 (LYLIGIAAIVVAVIMIFEMILSM) threads the bilayer. Glu-219 serves as a coordination point for cholesterol. Topologically, residues 225 to 236 (VLCCGIRNSSVY) are cytoplasmic.

The protein belongs to the tetraspanin (TM4SF) family. As to quaternary structure, homodimer. Part of a complex composed of CD19, CR2/CD21, CD81 and IFITM1/CD225 in the membrane of mature B cells. Interacts (via the second extracellular domain) with CD19; this interaction is initiated early during biosynthesis in the ER and enables trafficking of only properly folded CD19. Part of a complex that includes MHC class II/HLA-DR molecules and IFITM1. Interacts with IFITM1. Interacts with IFITM2 and IFITM3. Part of integrin-tetraspanin complex composed of CD9, CD81, beta-1 and beta-2 integrins in the membrane of monocyte/macrophages. Interacts (via the second extracellular domain) with integrin ITGAV:ITGB3. Interacts with CD247/CD3 zeta, ICAM1 and CD9 at the immune synapse on T cell membrane. Part of a GPCR-tetraspanin complex consisting at least of ADGRG1, CD81, possibly CD9, and GNA11 in which CD81 enhances the association of ADGRG1 with GNA11. Part of a complex composed of CD9, CD81, PTGFRN and IGSF8. Interacts directly with IGSF8. Interacts with CD53 and SCIMP. Interacts with SAMHD1 (via its C-terminus). Interacts with glypican GPC3 and with the transcriptional repressor HHEX; binding to GPC3 decreases the availability of free CD81 for binding to HHEX, resulting in nuclear translocation of HHEX and transcriptional repression. Interacts with CLDN1. Interacts with CLDN6 and CLDN9. Not glycosylated. In terms of processing, likely constitutively palmitoylated at low levels. Protein palmitoylation is up-regulated upon coligation of BCR and CD9-C2R-CD81 complexes in lipid rafts.

It localises to the cell membrane. Its subcellular location is the basolateral cell membrane. Functionally, structural component of specialized membrane microdomains known as tetraspanin-enriched microdomains (TERMs), which act as platforms for receptor clustering and signaling. Essential for trafficking and compartmentalization of CD19 receptor on the surface of activated B cells. Upon initial encounter with microbial pathogens, enables the assembly of CD19-CR2/CD21 and B cell receptor (BCR) complexes at signaling TERMs, lowering the threshold dose of antigen required to trigger B cell clonal expansion and antibody production. In T cells, facilitates the localization of CD247/CD3 zeta at antigen-induced synapses with B cells, providing for costimulation and polarization toward T helper type 2 phenotype. Present in MHC class II compartments, may also play a role in antigen presentation. Can act both as positive and negative regulator of homotypic or heterotypic cell-cell fusion processes. Positively regulates sperm-egg fusion and may be involved in acrosome reaction. In myoblasts, associates with CD9 and PTGFRN and inhibits myotube fusion during muscle regeneration. In macrophages, associates with CD9 and beta-1 and beta-2 integrins, and prevents macrophage fusion into multinucleated giant cells specialized in ingesting complement-opsonized large particles. Also prevents the fusion of mononuclear cell progenitors into osteoclasts in charge of bone resorption. May regulate the compartmentalization of enzymatic activities. In T cells, defines the subcellular localization of dNTPase SAMHD1 and permits its degradation by the proteasome, thereby controlling intracellular dNTP levels. Also involved in cell adhesion and motility. Positively regulates integrin-mediated adhesion of macrophages, particularly relevant for the inflammatory response in the lung. This is CD81 antigen (CD81) from Pan troglodytes (Chimpanzee).